A 93-amino-acid polypeptide reads, in one-letter code: Cobalt transport protein CbiN (93 aa).

2 helical membrane passes run 5 to 25 (LMLL…NHGG) and 63 to 83 (LLFT…LGYC).

Belongs to the CbiN family. In terms of assembly, forms an energy-coupling factor (ECF) transporter complex composed of an ATP-binding protein (A component, CbiO), a transmembrane protein (T component, CbiQ) and 2 possible substrate-capture proteins (S components, CbiM and CbiN) of unknown stoichimetry.

The protein resides in the cell inner membrane. The protein operates within cofactor biosynthesis; adenosylcobalamin biosynthesis. Functionally, part of the energy-coupling factor (ECF) transporter complex CbiMNOQ involved in cobalt import. The sequence is that of Cobalt transport protein CbiN from Salmonella arizonae (strain ATCC BAA-731 / CDC346-86 / RSK2980).